We begin with the raw amino-acid sequence, 127 residues long: Large ribosomal subunit protein bL12 (127 aa).

Belongs to the bacterial ribosomal protein bL12 family. In terms of assembly, homodimer. Part of the ribosomal stalk of the 50S ribosomal subunit. Forms a multimeric L10(L12)X complex, where L10 forms an elongated spine to which 2 to 4 L12 dimers bind in a sequential fashion. Binds GTP-bound translation factors.

Functionally, forms part of the ribosomal stalk which helps the ribosome interact with GTP-bound translation factors. Is thus essential for accurate translation. This Chloroherpeton thalassium (strain ATCC 35110 / GB-78) protein is Large ribosomal subunit protein bL12.